A 231-amino-acid chain; its full sequence is Putative N-acetylmannosamine-6-phosphate 2-epimerase (231 aa).

Belongs to the NanE family.

It catalyses the reaction an N-acyl-D-glucosamine 6-phosphate = an N-acyl-D-mannosamine 6-phosphate. It functions in the pathway amino-sugar metabolism; N-acetylneuraminate degradation; D-fructose 6-phosphate from N-acetylneuraminate: step 3/5. Functionally, converts N-acetylmannosamine-6-phosphate (ManNAc-6-P) to N-acetylglucosamine-6-phosphate (GlcNAc-6-P). This is Putative N-acetylmannosamine-6-phosphate 2-epimerase from Listeria innocua serovar 6a (strain ATCC BAA-680 / CLIP 11262).